Consider the following 373-residue polypeptide: Leucine aminopeptidase 1 (373 aa).

The signal sequence occupies residues 1–18; it reads MKLLSVLALSATATSVLG. Zn(2+) contacts are provided by His-176 and Asp-195. An N-linked (GlcNAc...) asparagine glycan is attached at Asn-196. Zn(2+) contacts are provided by Glu-234 and Asp-261. N-linked (GlcNAc...) asparagine glycosylation is present at Asn-288. An intrachain disulfide couples Cys-310 to Cys-314. His-343 is a binding site for Zn(2+). An N-linked (GlcNAc...) asparagine glycan is attached at Asn-348.

This sequence belongs to the peptidase M28 family. M28E subfamily. Monomer. Zn(2+) is required as a cofactor.

The protein localises to the secreted. With respect to regulation, activity is inhibited by EDTA, o-phenanthroline, bestatin and amastatin. Its function is as follows. Extracellular aminopeptidase which contributes to pathogenicity. This Trichophyton rubrum (Athlete's foot fungus) protein is Leucine aminopeptidase 1 (LAP1).